The primary structure comprises 307 residues: MATH domain and coiled-coil domain-containing protein At3g58380 (307 aa).

An MATH domain is found at Asp6–Val132. A coiled-coil region spans residues Lys238–Asn290.

This is MATH domain and coiled-coil domain-containing protein At3g58380 from Arabidopsis thaliana (Mouse-ear cress).